We begin with the raw amino-acid sequence, 101 residues long: Small ribosomal subunit protein uS14 (101 aa).

Belongs to the universal ribosomal protein uS14 family. In terms of assembly, part of the 30S ribosomal subunit. Contacts proteins S3 and S10.

Its function is as follows. Binds 16S rRNA, required for the assembly of 30S particles and may also be responsible for determining the conformation of the 16S rRNA at the A site. The chain is Small ribosomal subunit protein uS14 from Vibrio campbellii (strain ATCC BAA-1116).